The primary structure comprises 165 residues: Putative pre-16S rRNA nuclease (165 aa).

Belongs to the YqgF nuclease family.

It is found in the cytoplasm. In terms of biological role, could be a nuclease involved in processing of the 5'-end of pre-16S rRNA. The protein is Putative pre-16S rRNA nuclease of Beijerinckia indica subsp. indica (strain ATCC 9039 / DSM 1715 / NCIMB 8712).